We begin with the raw amino-acid sequence, 272 residues long: Dermonecrotic toxin LvSicTox-alphaIC1aiii (272 aa).

H4 is an active-site residue. Positions 24 and 26 each coordinate Mg(2+). The Nucleophile role is filled by H40. Intrachain disulfides connect C44/C50 and C46/C189. Residue D84 participates in Mg(2+) binding.

It belongs to the arthropod phospholipase D family. Class II subfamily. The cofactor is Mg(2+). Expressed by the venom gland.

It localises to the secreted. The enzyme catalyses an N-(acyl)-sphingosylphosphocholine = an N-(acyl)-sphingosyl-1,3-cyclic phosphate + choline. It catalyses the reaction an N-(acyl)-sphingosylphosphoethanolamine = an N-(acyl)-sphingosyl-1,3-cyclic phosphate + ethanolamine. It carries out the reaction a 1-acyl-sn-glycero-3-phosphocholine = a 1-acyl-sn-glycero-2,3-cyclic phosphate + choline. The catalysed reaction is a 1-acyl-sn-glycero-3-phosphoethanolamine = a 1-acyl-sn-glycero-2,3-cyclic phosphate + ethanolamine. Functionally, dermonecrotic toxins cleave the phosphodiester linkage between the phosphate and headgroup of certain phospholipids (sphingolipid and lysolipid substrates), forming an alcohol (often choline) and a cyclic phosphate. This toxin acts on sphingomyelin (SM). It may also act on ceramide phosphoethanolamine (CPE), lysophosphatidylcholine (LPC) and lysophosphatidylethanolamine (LPE), but not on lysophosphatidylserine (LPS), and lysophosphatidylglycerol (LPG). It acts by transphosphatidylation, releasing exclusively cyclic phosphate products as second products. Induces dermonecrosis, hemolysis, increased vascular permeability, edema, inflammatory response, and platelet aggregation. This chain is Dermonecrotic toxin LvSicTox-alphaIC1aiii, found in Loxosceles variegata (Recluse spider).